The following is a 102-amino-acid chain: Small ribosomal subunit protein uS10 (102 aa).

The protein belongs to the universal ribosomal protein uS10 family. In terms of assembly, part of the 30S ribosomal subunit.

Functionally, involved in the binding of tRNA to the ribosomes. This Nitrosomonas eutropha (strain DSM 101675 / C91 / Nm57) protein is Small ribosomal subunit protein uS10.